The following is a 1187-amino-acid chain: Trafficking protein particle complex II-specific subunit 120 homolog (1187 aa).

The interval 1037-1059 (GTTAKTDSSKEPGDGSSRSADES) is disordered.

The protein belongs to the TRS120 family. As to quaternary structure, part of the multisubunit TRAPP (transport protein particle) II complex composed of BET3, BET5, TRS20, TRS23, TRS31, TRS33, TRS65, TRS85, TRS120 and TRS130.

It localises to the golgi apparatus. The protein resides in the trans-Golgi network. The protein localises to the early endosome. Its function is as follows. Specific subunit of the TRAPP II complex, a highly conserved vesicle tethering complex that is required for the proper transport of proteins in post-Golgi trafficking pathways to the growing cell plate in mitotic active cells. The chain is Trafficking protein particle complex II-specific subunit 120 homolog from Oryza sativa subsp. japonica (Rice).